Consider the following 155-residue polypeptide: Endoribonuclease YbeY (155 aa).

Positions 114, 118, and 124 each coordinate Zn(2+).

Belongs to the endoribonuclease YbeY family. Zn(2+) is required as a cofactor.

Its subcellular location is the cytoplasm. Single strand-specific metallo-endoribonuclease involved in late-stage 70S ribosome quality control and in maturation of the 3' terminus of the 16S rRNA. This is Endoribonuclease YbeY from Escherichia coli O6:K15:H31 (strain 536 / UPEC).